Here is a 396-residue protein sequence, read N- to C-terminus: 1-deoxy-D-xylulose 5-phosphate reductoisomerase (396 aa).

Residues threonine 10, glycine 11, serine 12, isoleucine 13, glycine 36, lysine 37, asparagine 38, and asparagine 124 each contribute to the NADPH site. Residue lysine 125 participates in 1-deoxy-D-xylulose 5-phosphate binding. Position 126 (glutamate 126) interacts with NADPH. Aspartate 150 is a Mn(2+) binding site. 1-deoxy-D-xylulose 5-phosphate-binding residues include serine 151, glutamate 152, serine 186, and histidine 209. Residue glutamate 152 coordinates Mn(2+). Glycine 215 is a binding site for NADPH. Residues serine 222, asparagine 227, lysine 228, and glutamate 231 each coordinate 1-deoxy-D-xylulose 5-phosphate. Glutamate 231 is a binding site for Mn(2+).

Belongs to the DXR family. The cofactor is Mg(2+). Requires Mn(2+) as cofactor.

The catalysed reaction is 2-C-methyl-D-erythritol 4-phosphate + NADP(+) = 1-deoxy-D-xylulose 5-phosphate + NADPH + H(+). It functions in the pathway isoprenoid biosynthesis; isopentenyl diphosphate biosynthesis via DXP pathway; isopentenyl diphosphate from 1-deoxy-D-xylulose 5-phosphate: step 1/6. Its function is as follows. Catalyzes the NADPH-dependent rearrangement and reduction of 1-deoxy-D-xylulose-5-phosphate (DXP) to 2-C-methyl-D-erythritol 4-phosphate (MEP). This is 1-deoxy-D-xylulose 5-phosphate reductoisomerase from Glaesserella parasuis serovar 5 (strain SH0165) (Haemophilus parasuis).